A 138-amino-acid polypeptide reads, in one-letter code: Gas vesicle protein A (138 aa).

The segment at 74 to 138 (EAGPRKDPGL…STSRKKEEQE (65 aa)) is disordered. Low complexity predominate over residues 116–129 (GSSSGSSSGSSSRS).

It belongs to the gas vesicle GvpA family. The gas vesicle shell is 2 nm thick and consists of a single layer of this protein. It forms helical ribs nearly perpendicular to the long axis of the vesicle.

It is found in the gas vesicle shell. In terms of biological role, gas vesicles are hollow, gas filled proteinaceous nanostructures found in some microorganisms. During planktonic growth they allow positioning of the organism at a favorable depth for light or nutrient acquisition. GvpA forms the protein shell. It is not clear what function gas vesicles perform in soil bacteria. This Streptomyces sp. (strain CB03234) protein is Gas vesicle protein A.